Reading from the N-terminus, the 450-residue chain is Crinkler effector protein 63 (450 aa).

A signal peptide spans 1-17 (MVKLFCAIVGAAGSAFP). The segment at 18–55 (VDIDAGQSAGDLKDAIKAKNPATITCDAKDLQLSLAKT) is LQLFLAK domain. Residues 58-117 (GAWLPDDDQAALDLEDGKVHEDIQALIDGEKMKATWTIEDVLTANNMTKRKGRAPKSRQI) are DWL domain. Asn-103 carries N-linked (GlcNAc...) asparagine glycosylation. Positions 118–124 (HVLVVVP) match the HVLVXXP motif motif. The effector domain stretch occupies residues 125–450 (EGAFGSASET…RSIPTFSYFS (326 aa)). The short motif at 218–224 (QRKRYRR) is the Nuclear localization signal (NLS) element. An N-linked (GlcNAc...) asparagine glycan is attached at Asn-342.

The protein belongs to the Crinkler effector family. In terms of assembly, forms a homodimer via an inverted association manner. Forms heterodimers with CRN79 and CRN115.

Its subcellular location is the secreted. It is found in the host nucleus. The protein localises to the host nucleoplasm. Secreted effector that, with CRN115, is critical to pathogenesis by modulating host defenses. Induces cell death in plant host cells. Suppresses callose deposition and affects expression of defense-related genes including two salicylic acid (SA) signal-induced and antimicrobial PR genes (PR1 and PR2), and genes involved in jasmonic acid (JA)/ethylene (ET)-mediated defense pathway (ERF1, ORA59, PDF1.2). CRN115 and CRN63 may share the same molecular host targets that are involved in the cell death signal transduction pathway and that their differential activities are dependent on plant nuclear localization or not. Does not affect MAPK activation and BIK1 phosphorylation and acts downstream of the MAPK cascades in PTI signaling. The polypeptide is Crinkler effector protein 63 (Phytophthora sojae (strain P6497) (Soybean stem and root rot agent)).